The chain runs to 917 residues: DNA mismatch repair protein spellchecker 1 (917 aa).

Residue 667-674 (GPNMGGKS) coordinates ATP.

The protein belongs to the DNA mismatch repair MutS family. As to quaternary structure, heterodimer of Msh2/Spel and Msh6.

It is found in the nucleus. In terms of biological role, involved in postreplication mismatch repair. Binds specifically to DNA containing mismatched nucleotides thus providing a target for the excision repair processes characteristic of postreplication mismatch repair. The polypeptide is DNA mismatch repair protein spellchecker 1 (spel1) (Drosophila melanogaster (Fruit fly)).